Reading from the N-terminus, the 653-residue chain is Large subunit GTPase 1 homolog (653 aa).

The segment at 1–47 (MGKKRGTGLGRSLQRQRGSERRGASSWLHASEVVGESGPERRSAVEQ) is disordered. Residues 155–439 (WRQLWRVIER…LCDCPGLVMP (285 aa)) enclose the CP-type G domain. 203 to 206 (NKAD) contacts GTP. Residues 248-275 (ADSVADDLSDSEEESSSQEEDVTAEDSA) show a composition bias toward acidic residues. The interval 248 to 323 (ADSVADDLSD…TCSEDEGGDK (76 aa)) is disordered. Positions 276 to 291 (ESTSTGSALQTENQCL) are enriched in polar residues. Residues 293-320 (SDDDSSDEYEDCEDEEEDDWQTCSEDEG) show a composition bias toward acidic residues. Residues 388-395 (GYPNVGKS) and 432-435 (DCPG) each bind GTP. The tract at residues 621 to 653 (APSAGSVVGKPWKKHGNRNKKEKVRRITKHLEN) is disordered. Over residues 631–653 (PWKKHGNRNKKEKVRRITKHLEN) the composition is skewed to basic residues.

Belongs to the TRAFAC class YlqF/YawG GTPase family. LSG1 subfamily.

The protein localises to the cytoplasm. The protein resides in the endoplasmic reticulum. It localises to the nucleus. Its subcellular location is the cajal body. It catalyses the reaction GTP + H2O = GDP + phosphate + H(+). Its function is as follows. GTPase required for the XPO1/CRM1-mediated nuclear export of the 60S ribosomal subunit. Probably acts by mediating the release of NMD3 from the 60S ribosomal subunit after export into the cytoplasm. Functionally, functions as a GTPase. May act by mediating the release of NMD3 from the 60S ribosomal subunit after export into the cytoplasm during the 60S ribosomal subunit maturation. The chain is Large subunit GTPase 1 homolog from Gallus gallus (Chicken).